We begin with the raw amino-acid sequence, 89 residues long: HssA/B-like protein 14 (89 aa).

Belongs to the hssA/B family.

This Dictyostelium discoideum (Social amoeba) protein is HssA/B-like protein 14 (hssl14).